Here is a 64-residue protein sequence, read N- to C-terminus: Large ribosomal subunit protein bL33c (64 aa).

The protein belongs to the bacterial ribosomal protein bL33 family.

It is found in the plastid. It localises to the chloroplast. The polypeptide is Large ribosomal subunit protein bL33c (rpl33) (Trieres chinensis (Marine centric diatom)).